A 471-amino-acid chain; its full sequence is Putative multidrug resistance protein MdtD (471 aa).

Residues M1–Q11 lie on the Periplasmic side of the membrane. Residues L12–A32 traverse the membrane as a helical segment. Topologically, residues L33–H48 are cytoplasmic. The chain crosses the membrane as a helical span at residues M49–A69. Over D70–N76 the chain is Periplasmic. The chain crosses the membrane as a helical span at residues I77–T97. Residues L98–L101 are Cytoplasmic-facing. Residues L102 to M124 traverse the membrane as a helical segment. Residues K125–T137 are Periplasmic-facing. A helical membrane pass occupies residues F138 to V158. Residues E159 to H164 lie on the Cytoplasmic side of the membrane. Residues W165–M185 form a helical membrane-spanning segment. The Periplasmic segment spans residues P186–D196. The helical transmembrane segment at L197–S217 threads the bilayer. The Cytoplasmic portion of the chain corresponds to K218–P224. Residues L225–A245 form a helical membrane-spanning segment. Residues R246–T262 are Periplasmic-facing. The helical transmembrane segment at F263–M283 threads the bilayer. The Cytoplasmic segment spans residues T284–P285. A helical membrane pass occupies residues V286–M306. The Periplasmic portion of the chain corresponds to V307–T341. The helical transmembrane segment at L342–L362 threads the bilayer. Residues Q363–S395 are Cytoplasmic-facing. The chain crosses the membrane as a helical span at residues M396–F416. Residues G417–T430 are Periplasmic-facing. A helical transmembrane segment spans residues V431–A451. The Cytoplasmic portion of the chain corresponds to R452–Q471.

Belongs to the major facilitator superfamily. TCR/Tet family.

Its subcellular location is the cell inner membrane. The sequence is that of Putative multidrug resistance protein MdtD from Escherichia coli O17:K52:H18 (strain UMN026 / ExPEC).